A 1249-amino-acid polypeptide reads, in one-letter code: MAQTNGELEHSKETPEQLTNGNHPEETQEEDNTGGLFQITVKLPHEPYKIQVMVSSQEQVQDVRQSIVELPSTFQYTCFHLEFNGQRINDFVELSEVPDLKADSEITLVEDPYNEKEARMHVVRMRELVGAAGDRVDNLHGISAGLSLHDAISAEVADASEKEHSLSKYDITSSPSLKTILPRAEAPLPKTVKAISLSPWNPVPYHLRQKGHLLYLQVTTNEGEQFQITSHISGFYVNKNSNMKFDPSPKTIPKSGRAHSLLTLIAHLSPSFNASFEALQESNNKKDLLTTFPFQNAIPNNPWLVPPPTSTANAHQPDITRSQENYLISGVDNAETLRDWNEEFQTTRELPRETVQDRVFRERLTSKLFADYNEAAARGAVLVARGEVAPLNPTESRDAQIFVYNNIFYSFGADGVGTFASEGGDEAARVAVGKDVVGIKAVNQLDINGLFTPGTVVVDYLGKRIVGQSIVPGIFKQREPGEHQIDYGGVEGKDVVATHPDFVSVFEKMSKALRVKKHAVWDKEGQRHELEGSVETKGLLGTDGRKYVLDLYRVTPLDVMWQEEEGSDAYPHRMSVLRLELVESYWRHKMSQYVKAEVERRRSAKAEADAAKAESSEATESKEQASEEKSEEDQERVDISGFSLALNPDVCSGQVPQTDEEKEQWAQDEKEVRETCDYLRSKIMPELIQDLHDGDVGFPMDGQSLSQLLHKRGINIRYLGKLAQLSKEKGSRLDALSTLLVQEMIARAFKHIANEYLRNVPAPFVASCISHLLNCLLGADVNPNPVAEIDASLRSIYPEGDFSFEKATPATLRAAIEKQVTIRYRFTLEAEWFNSLRHLQLLRDLSIKLGLQLGAREFIFDKSQIPAKAPATNGANGVAQEEGKNKKKKKGGDSSSPARAAKEEKPILAIVPDDILNIVPLVKDASPRSSLAEEALEAGRISLMQNQKQLGQELILESLSLHEQIYGILHPEVAKLYHQLSMLYYQTDEKEAAVELARKAVIVTERTLGVDSADTILSYLNLSLFEHASGNTKTALAYIKHAMDLWKIIYGANHPDSITTMNNAAVMLQHLKQYSDSRKWFEASLEVCESLFGRQSINTATILFQLAQALALDQDSKGAVGKMRDAYNIFLSQLGPNDRNTKEAETWLEQLTQNAVSIAKHAKDIQARRLRRVNMNPRSLGTKIQPQVGQTAPEVAGARAPGSASLDSRSVDELLKFIEGGDAGSSKAKQKKRAAASNPKLRGSKKSSA.

The interval methionine 1–asparagine 32 is disordered. A Clu domain is found at aspartate 318–glutamine 562. The segment covering lysine 605–glutamate 628 has biased composition (basic and acidic residues). Disordered regions lie at residues lysine 605–arginine 636 and lysine 868–glutamate 903. 3 TPR repeats span residues alanine 974–threonine 1007, isoleucine 1016–isoleucine 1049, and isoleucine 1058–leucine 1091. The tract at residues asparagine 1174–alanine 1249 is disordered. Positions asparagine 1176–glutamine 1190 are enriched in polar residues.

This sequence belongs to the CLU family. As to quaternary structure, may associate with the eukaryotic translation initiation factor 3 (eIF-3) complex.

It localises to the cytoplasm. Its function is as follows. mRNA-binding protein involved in proper cytoplasmic distribution of mitochondria. This is Clustered mitochondria protein homolog from Aspergillus niger (strain ATCC MYA-4892 / CBS 513.88 / FGSC A1513).